The chain runs to 307 residues: 3-methyl-2-oxobutanoate hydroxymethyltransferase (307 aa).

Mg(2+) contacts are provided by aspartate 61 and aspartate 100. 3-methyl-2-oxobutanoate-binding positions include 61 to 62 (DS), aspartate 100, and lysine 130. Position 132 (glutamate 132) interacts with Mg(2+). Catalysis depends on glutamate 199, which acts as the Proton acceptor.

Belongs to the PanB family. Homodecamer; pentamer of dimers. The cofactor is Mg(2+).

The protein resides in the cytoplasm. The catalysed reaction is 3-methyl-2-oxobutanoate + (6R)-5,10-methylene-5,6,7,8-tetrahydrofolate + H2O = 2-dehydropantoate + (6S)-5,6,7,8-tetrahydrofolate. It participates in cofactor biosynthesis; (R)-pantothenate biosynthesis; (R)-pantoate from 3-methyl-2-oxobutanoate: step 1/2. Functionally, catalyzes the reversible reaction in which hydroxymethyl group from 5,10-methylenetetrahydrofolate is transferred onto alpha-ketoisovalerate to form ketopantoate. The protein is 3-methyl-2-oxobutanoate hydroxymethyltransferase of Nitratidesulfovibrio vulgaris (strain ATCC 29579 / DSM 644 / CCUG 34227 / NCIMB 8303 / VKM B-1760 / Hildenborough) (Desulfovibrio vulgaris).